We begin with the raw amino-acid sequence, 346 residues long: UDP-3-O-acylglucosamine N-acyltransferase (346 aa).

His-253 acts as the Proton acceptor in catalysis.

It belongs to the transferase hexapeptide repeat family. LpxD subfamily. As to quaternary structure, homotrimer.

It carries out the reaction a UDP-3-O-[(3R)-3-hydroxyacyl]-alpha-D-glucosamine + a (3R)-hydroxyacyl-[ACP] = a UDP-2-N,3-O-bis[(3R)-3-hydroxyacyl]-alpha-D-glucosamine + holo-[ACP] + H(+). It participates in bacterial outer membrane biogenesis; LPS lipid A biosynthesis. Catalyzes the N-acylation of UDP-3-O-acylglucosamine using 3-hydroxyacyl-ACP as the acyl donor. Is involved in the biosynthesis of lipid A, a phosphorylated glycolipid that anchors the lipopolysaccharide to the outer membrane of the cell. The chain is UDP-3-O-acylglucosamine N-acyltransferase from Rickettsia prowazekii (strain Madrid E).